The following is a 156-amino-acid chain: Large ribosomal subunit protein uL13 (156 aa).

It belongs to the universal ribosomal protein uL13 family. Part of the 50S ribosomal subunit.

Its function is as follows. This protein is one of the early assembly proteins of the 50S ribosomal subunit, although it is not seen to bind rRNA by itself. It is important during the early stages of 50S assembly. The chain is Large ribosomal subunit protein uL13 from Archaeoglobus fulgidus (strain ATCC 49558 / DSM 4304 / JCM 9628 / NBRC 100126 / VC-16).